Consider the following 477-residue polypeptide: Probable F-box protein At5g25300 (477 aa).

A coiled-coil region spans residues 346–377 (VDMNKEDSQIEINEKETKINQEHDQSDETQAK). The F-box domain occupies 412–458 (SPPWSELPGDILRSVFERLSFVDFQRAKQTCPIKRSKSNCLRLWLIT).

In Arabidopsis thaliana (Mouse-ear cress), this protein is Probable F-box protein At5g25300.